A 480-amino-acid polypeptide reads, in one-letter code: Proline--tRNA ligase (480 aa).

Belongs to the class-II aminoacyl-tRNA synthetase family. ProS type 3 subfamily. In terms of assembly, homodimer.

It localises to the cytoplasm. It carries out the reaction tRNA(Pro) + L-proline + ATP = L-prolyl-tRNA(Pro) + AMP + diphosphate. Functionally, catalyzes the attachment of proline to tRNA(Pro) in a two-step reaction: proline is first activated by ATP to form Pro-AMP and then transferred to the acceptor end of tRNA(Pro). The protein is Proline--tRNA ligase of Pyrococcus horikoshii (strain ATCC 700860 / DSM 12428 / JCM 9974 / NBRC 100139 / OT-3).